The following is a 309-amino-acid chain: Methionyl-tRNA formyltransferase (309 aa).

S109 to P112 is a (6S)-5,6,7,8-tetrahydrofolate binding site.

The protein belongs to the Fmt family.

It catalyses the reaction L-methionyl-tRNA(fMet) + (6R)-10-formyltetrahydrofolate = N-formyl-L-methionyl-tRNA(fMet) + (6S)-5,6,7,8-tetrahydrofolate + H(+). Functionally, attaches a formyl group to the free amino group of methionyl-tRNA(fMet). The formyl group appears to play a dual role in the initiator identity of N-formylmethionyl-tRNA by promoting its recognition by IF2 and preventing the misappropriation of this tRNA by the elongation apparatus. The polypeptide is Methionyl-tRNA formyltransferase (Clostridioides difficile (strain 630) (Peptoclostridium difficile)).